The primary structure comprises 126 residues: Protein ApaG (126 aa).

The region spanning 2 to 126 is the ApaG domain; sequence SDPRYQVDVS…FRLAVPGALH (125 aa).

The chain is Protein ApaG from Pseudomonas fluorescens (strain ATCC BAA-477 / NRRL B-23932 / Pf-5).